Consider the following 202-residue polypeptide: Protein phosphatase 1 regulatory subunit 1B (202 aa).

The residue at position 1 (M1) is an N-acetylmethionine. The interval 1-202 (MDPKDRKKIQ…QRPAHPEPGT (202 aa)) is disordered. T34 is modified (phosphothreonine; by PKA). The span at 41-63 (LSEHSSPEEEASPHQRASGEGHH) shows a compositional bias: basic and acidic residues. Phosphoserine is present on residues S45 and S46. T75 carries the phosphothreonine; by CDK5 modification. Positions 89 to 100 (HLQSISNLGENQ) are enriched in polar residues. S102 bears the Phosphoserine mark. Basic and acidic residues predominate over residues 109-118 (GELRELGYPR). The span at 119-136 (EEEEEEEEEDEEEEEDSQ) shows a compositional bias: acidic residues. Residue S135 is modified to Phosphoserine. The span at 191–202 (EPQRPAHPEPGT) shows a compositional bias: basic and acidic residues.

Belongs to the protein phosphatase inhibitor 1 family. Dopamine- and cyclic AMP-regulated neuronal phosphoprotein. Post-translationally, phosphorylation of Thr-34 is required for activity.

Its subcellular location is the cytoplasm. In terms of biological role, inhibitor of protein-phosphatase 1. The sequence is that of Protein phosphatase 1 regulatory subunit 1B (PPP1R1B) from Bos taurus (Bovine).